A 230-amino-acid chain; its full sequence is Protein RESPONSE TO ABA AND SALT 1 (230 aa).

The 224-residue stretch at 7-230 (SQSFTIFVDG…RLRDRDQERA (224 aa)) folds into the DOG1 domain.

Negative regulator of salt (NaCl) tolerance probably by enhancing abscisic acid (ABA) sensitivity. In Arabidopsis thaliana (Mouse-ear cress), this protein is Protein RESPONSE TO ABA AND SALT 1.